The following is a 352-amino-acid chain: N-acetyl-gamma-glutamyl-phosphate reductase (352 aa).

It belongs to the NAGSA dehydrogenase family. Type 1 subfamily.

Its subcellular location is the cytoplasm. It carries out the reaction N-acetyl-L-glutamate 5-semialdehyde + phosphate + NADP(+) = N-acetyl-L-glutamyl 5-phosphate + NADPH + H(+). It participates in amino-acid biosynthesis; L-arginine biosynthesis; N(2)-acetyl-L-ornithine from L-glutamate: step 3/4. Its function is as follows. Catalyzes the NADPH-dependent reduction of N-acetyl-5-glutamyl phosphate to yield N-acetyl-L-glutamate 5-semialdehyde. The sequence is that of N-acetyl-gamma-glutamyl-phosphate reductase from Nostoc ellipsosporum.